A 278-amino-acid chain; its full sequence is Large ribosomal subunit protein uL2 (278 aa).

The segment at His201–Lys278 is disordered. Over residues Gly210 to Val221 the composition is skewed to basic residues.

It belongs to the universal ribosomal protein uL2 family. Part of the 50S ribosomal subunit. Forms a bridge to the 30S subunit in the 70S ribosome.

One of the primary rRNA binding proteins. Required for association of the 30S and 50S subunits to form the 70S ribosome, for tRNA binding and peptide bond formation. It has been suggested to have peptidyltransferase activity; this is somewhat controversial. Makes several contacts with the 16S rRNA in the 70S ribosome. The protein is Large ribosomal subunit protein uL2 of Agrobacterium fabrum (strain C58 / ATCC 33970) (Agrobacterium tumefaciens (strain C58)).